The primary structure comprises 67 residues: Small ribosomal subunit protein bS21 (67 aa).

The protein belongs to the bacterial ribosomal protein bS21 family.

The polypeptide is Small ribosomal subunit protein bS21 (Rhodospirillum centenum (strain ATCC 51521 / SW)).